A 334-amino-acid chain; its full sequence is Dual specificity mitogen-activated protein kinase kinase 6 (334 aa).

The segment covering 1 to 11 has biased composition (basic residues); it reads MSQSKGKKRNP. The disordered stretch occupies residues 1–34; it reads MSQSKGKKRNPGLKIPKEAFEQPQTSSTPPRDLD. A d domain region spans residues 4 to 19; it reads SKGKKRNPGLKIPKEA. In terms of domain architecture, Protein kinase spans 53–314; the sequence is LEPIVELGRG…YPELMQHPFF (262 aa). Residues 59–67 and Lys-82 each bind ATP; that span reads LGRGAYGVV. The Proton acceptor role is filled by Asp-179. The residue at position 207 (Ser-207) is a Phosphoserine; by MAPK3. Thr-211 is subject to Phosphothreonine; by MAPK3. The segment at 311 to 334 is DVD domain; the sequence is HPFFTVHESKAADVASFVKLILGD.

Belongs to the protein kinase superfamily. STE Ser/Thr protein kinase family. MAP kinase kinase subfamily. In terms of assembly, dimer. Interacts (via its D domain) with its substrates MAPK11, MAPK12, MAPK13 and MAPK14. Interacts (via its DVD domain) with MAP3Ks activators like MAP3K5/ASK1, MAP3K1/MEKK1, MAP3K2/MEKK2, MAP3K3/MEKK3, MAP3K4/MEKK4, MAP3K7/TAK1, MAP3K11/MLK3 and MAP3K17/TAOK2. Interacts with DCTN1. Interacts with EIF2AK2/PKR. Weakly autophosphorylated. Phosphorylated at Ser-207 and Thr-211 by the majority of M3Ks, such as MAP3K5/ASK1, MAP3K1/MEKK1, MAP3K2/MEKK2, MAP3K3/MEKK3, MAP3K4/MEKK4, MAP3K7/TAK1, MAP3K11/MLK3 and MAP3K17/TAOK2. Post-translationally, in response to genotoxic stress, MAP3K-phosphorylated MAP2K6 is ubiquitinated and degraded by the SCF(FBXO31) complex.

Its subcellular location is the nucleus. The protein localises to the cytoplasm. It localises to the cytoskeleton. It catalyses the reaction L-seryl-[protein] + ATP = O-phospho-L-seryl-[protein] + ADP + H(+). The enzyme catalyses L-threonyl-[protein] + ATP = O-phospho-L-threonyl-[protein] + ADP + H(+). The catalysed reaction is L-tyrosyl-[protein] + ATP = O-phospho-L-tyrosyl-[protein] + ADP + H(+). Activated by dual phosphorylation on Ser-207 and Thr-211 in response to a variety of cellular stresses, including UV radiation, osmotic shock, hypoxia, inflammatory cytokines, interferon gamma (IFNG), and less often by growth factors. MAP2K6/MKK6 is activated by the majority of M3Ks, such as MAP3K5/ASK1, MAP3K1/MEKK1, MAP3K2/MEKK2, MAP3K3/MEKK3, MAP3K4/MEKK4, MAP3K7/TAK1, MAP3K11/MLK3 and MAP3K17/TAOK2. Functionally, dual specificity protein kinase which acts as an essential component of the MAP kinase signal transduction pathway. With MAP3K3/MKK3, catalyzes the concomitant phosphorylation of a threonine and a tyrosine residue in the MAP kinases p38 MAPK11, MAPK12, MAPK13 and MAPK14 and plays an important role in the regulation of cellular responses to cytokines and all kinds of stresses. Especially, MAP2K3/MKK3 and MAP2K6/MKK6 are both essential for the activation of MAPK11 and MAPK13 induced by environmental stress, whereas MAP2K6/MKK6 is the major MAPK11 activator in response to TNF. MAP2K6/MKK6 also phosphorylates and activates PAK6. The p38 MAP kinase signal transduction pathway leads to direct activation of transcription factors. Nuclear targets of p38 MAP kinase include the transcription factors ATF2 and ELK1. Within the p38 MAPK signal transduction pathway, MAP3K6/MKK6 mediates phosphorylation of STAT4 through MAPK14 activation, and is therefore required for STAT4 activation and STAT4-regulated gene expression in response to IL-12 stimulation. The pathway is also crucial for IL-6-induced SOCS3 expression and down-regulation of IL-6-mediated gene induction; and for IFNG-dependent gene transcription. Has a role in osteoclast differentiation through NF-kappa-B transactivation by TNFSF11, and in endochondral ossification and since SOX9 is another likely downstream target of the p38 MAPK pathway. MAP2K6/MKK6 mediates apoptotic cell death in thymocytes. Acts also as a regulator for melanocytes dendricity, through the modulation of Rho family GTPases. The chain is Dual specificity mitogen-activated protein kinase kinase 6 (Map2k6) from Mus musculus (Mouse).